We begin with the raw amino-acid sequence, 314 residues long: Methionyl-tRNA formyltransferase (314 aa).

110 to 113 serves as a coordination point for (6S)-5,6,7,8-tetrahydrofolate; sequence SLLP.

Belongs to the Fmt family.

It carries out the reaction L-methionyl-tRNA(fMet) + (6R)-10-formyltetrahydrofolate = N-formyl-L-methionyl-tRNA(fMet) + (6S)-5,6,7,8-tetrahydrofolate + H(+). Functionally, attaches a formyl group to the free amino group of methionyl-tRNA(fMet). The formyl group appears to play a dual role in the initiator identity of N-formylmethionyl-tRNA by promoting its recognition by IF2 and preventing the misappropriation of this tRNA by the elongation apparatus. The protein is Methionyl-tRNA formyltransferase of Lactobacillus acidophilus (strain ATCC 700396 / NCK56 / N2 / NCFM).